The following is an 89-amino-acid chain: Venom peptide BmKAPI (89 aa).

An N-terminal signal peptide occupies residues 1–22; that stretch reads MKFVFASFALFVIFLCFSQSLS. 5 disulfide bridges follow: Cys-28/Cys-66, Cys-37/Cys-62, Cys-41/Cys-55, Cys-46/Cys-86, and Cys-68/Cys-80. The TIL domain maps to 28 to 86; sequence CRDNEVFDNCISNCGPPRCSNILNTYPCTNLGPLCTPGCKCKDGRVYDNQGRCVLQTEC.

The protein belongs to the serine protease inhibitor-like (TIL domain-containing) family. As to expression, expressed by the venom gland.

Its subcellular location is the secreted. In terms of biological role, serine protease inhibitor. In Olivierus martensii (Manchurian scorpion), this protein is Venom peptide BmKAPI.